A 212-amino-acid chain; its full sequence is Pyridoxine/pyridoxamine 5'-phosphate oxidase (212 aa).

Residues 59–64, 74–75, Lys-81, and Gln-103 contribute to the FMN site; these read RMVLMK and YS. Residue Lys-64 participates in substrate binding. Substrate-binding residues include Tyr-121 and Arg-125. Residues 138 to 139 and Trp-183 each bind FMN; that span reads QS. A substrate-binding site is contributed by 189–191; it reads RLH. Arg-193 provides a ligand contact to FMN.

The protein belongs to the pyridoxamine 5'-phosphate oxidase family. As to quaternary structure, homodimer. It depends on FMN as a cofactor.

The enzyme catalyses pyridoxamine 5'-phosphate + O2 + H2O = pyridoxal 5'-phosphate + H2O2 + NH4(+). It carries out the reaction pyridoxine 5'-phosphate + O2 = pyridoxal 5'-phosphate + H2O2. It functions in the pathway cofactor metabolism; pyridoxal 5'-phosphate salvage; pyridoxal 5'-phosphate from pyridoxamine 5'-phosphate: step 1/1. The protein operates within cofactor metabolism; pyridoxal 5'-phosphate salvage; pyridoxal 5'-phosphate from pyridoxine 5'-phosphate: step 1/1. Its function is as follows. Catalyzes the oxidation of either pyridoxine 5'-phosphate (PNP) or pyridoxamine 5'-phosphate (PMP) into pyridoxal 5'-phosphate (PLP). This Rhodopseudomonas palustris (strain BisB5) protein is Pyridoxine/pyridoxamine 5'-phosphate oxidase.